Consider the following 124-residue polypeptide: Large ribosomal subunit protein bL20c (124 aa).

Belongs to the bacterial ribosomal protein bL20 family.

It localises to the plastid. The protein localises to the chloroplast. Its function is as follows. Binds directly to 23S ribosomal RNA and is necessary for the in vitro assembly process of the 50S ribosomal subunit. It is not involved in the protein synthesizing functions of that subunit. This is Large ribosomal subunit protein bL20c from Stigeoclonium helveticum (Green alga).